Here is a 599-residue protein sequence, read N- to C-terminus: Putative sensor histidine kinase NtrY-like (599 aa).

4 helical membrane passes run 17 to 37 (ILIL…FYVI), 44 to 64 (FSTI…LGIL), 85 to 105 (IVIA…VFSV), and 285 to 305 (IMFI…GVLF). The HAMP domain occupies 307–361 (AKIVKPIKKLVTATDKVKDGDLTVQVPENEVDKDEIGTLYAAFNRMIKQLSRQQR). The Histidine kinase domain maps to 378 to 589 (KVAHEIKNPL…IIDIKFDLKE (212 aa)). At His-381 the chain carries Phosphohistidine; by autocatalysis.

It is found in the cell membrane. The enzyme catalyses ATP + protein L-histidine = ADP + protein N-phospho-L-histidine.. In terms of biological role, member of the two-component regulatory system RP614/RP562. The polypeptide is Putative sensor histidine kinase NtrY-like (Rickettsia prowazekii (strain Madrid E)).